The primary structure comprises 61 residues: uncharacterized protein (61 aa).

A run of 2 helical transmembrane segments spans residues 4–24 (IIAFIWTFLLSHMACYLVASM) and 34–54 (SSVIAVVLYVLIMVLAEIMPM).

The protein localises to the cell membrane. This is an uncharacterized protein from Bacillus subtilis (strain 168).